Reading from the N-terminus, the 333-residue chain is Probable G-protein coupled receptor 33 (333 aa).

Over 1 to 30 the chain is Extracellular; that stretch reads MDLINSTDYLINASTLVRNSTQFLAPASKM. Asparagine 5, asparagine 12, and asparagine 19 each carry an N-linked (GlcNAc...) asparagine glycan. A helical transmembrane segment spans residues 31–53; the sequence is IIALSLYISSIIGTITNGLYLWV. At 54 to 64 the chain is on the cytoplasmic side; sequence LRFKMKQTVNT. The helical transmembrane segment at 65–86 threads the bilayer; it reads LLFFHLILSYFISTMILPFMAT. The Extracellular segment spans residues 87 to 103; that stretch reads SQLQDNHWNFGTALCKV. A disulfide bond links cysteine 101 and cysteine 179. The chain crosses the membrane as a helical span at residues 104–124; the sequence is FNGTLSLGMFTSVFFLSAIGL. Topologically, residues 125 to 143 are cytoplasmic; sequence DRYLLTLHPVWSQQHRTPR. The helical transmembrane segment at 144–165 threads the bilayer; sequence WASSIVLGVWISAAALSIPYLI. Over 166–209 the chain is Extracellular; the sequence is FRQTHHDRKGKVTCQNNYAVSTNWESKEMQALRQWIHVACFISR. A helical transmembrane segment spans residues 210–230; it reads FLLGFLLPFFIIIFCYERVAS. Topologically, residues 231–246 are cytoplasmic; the sequence is KVKERSLFKSSKPFKV. The chain crosses the membrane as a helical span at residues 247–268; that stretch reads MMTAIISFFVCWMPYHIHQGLL. At 269–283 the chain is on the extracellular side; sequence LTMNQSLLLELTLIL. Asparagine 272 is a glycosylation site (N-linked (GlcNAc...) asparagine). A helical transmembrane segment spans residues 284–303; it reads TVLTTSFNTIFSPTLYLFVG. At 304–333 the chain is on the cytoplasmic side; it reads ENFKKVFKKSILALFESTFSEDSSVERTQT.

It belongs to the G-protein coupled receptor 1 family.

The protein localises to the cell membrane. Functionally, orphan receptor; could be a chemoattractant receptor. This is Probable G-protein coupled receptor 33 (GPR33) from Pan paniscus (Pygmy chimpanzee).